A 401-amino-acid chain; its full sequence is S-adenosylmethionine synthase (401 aa).

137 to 142 (GQGSGD) provides a ligand contact to ATP.

The protein belongs to the AdoMet synthase 2 family. The cofactor is Mg(2+).

The catalysed reaction is L-methionine + ATP + H2O = S-adenosyl-L-methionine + phosphate + diphosphate. It functions in the pathway amino-acid biosynthesis; S-adenosyl-L-methionine biosynthesis; S-adenosyl-L-methionine from L-methionine: step 1/1. Functionally, catalyzes the formation of S-adenosylmethionine from methionine and ATP. This is S-adenosylmethionine synthase from Haloquadratum walsbyi (strain DSM 16790 / HBSQ001).